Here is a 505-residue protein sequence, read N- to C-terminus: Kinesin light chain 3 (505 aa).

The segment at 1–20 (MSVQVAAPGSTGLGPERLNP) is disordered. Residues 90 to 150 (ALSAHVGVLE…EEEKSHLQFL (61 aa)) are a coiled coil. A disordered region spans residues 154 to 197 (RQYDPPEESQRPDSPPRRDSLASLFPSEEEEKKGPEAAGAAAAQ). A compositionally biased stretch (basic and acidic residues) spans 161 to 173 (ESQRPDSPPRRDS). The residue at position 173 (S173) is a Phosphoserine. TPR repeat units follow at residues 207-240 (LRTL…LERS), 249-282 (ATML…REQT), 291-324 (AATL…REKV), 333-366 (AKQL…YEAL), and 375-408 (AKTK…EALP). The tract at residues 409-439 (APLGAPQGGTAGEAQQQVLRRSSSFSKLRES) is disordered. The segment covering 421–434 (EAQQQVLRRSSSFS) has biased composition (polar residues). The residue at position 467 (S467) is a Phosphoserine. The interval 486 to 505 (QHLNEASRTLSASTQDLSPR) is disordered. The residue at position 499 (T499) is a Phosphothreonine. A Phosphoserine modification is found at S503.

Belongs to the kinesin light chain family. In terms of assembly, oligomer composed of two heavy chains and two light chains. Associates with microtubulin in an ATP-dependent manner. Interacts with KIF5C. Interacts with ODF1. Interacts with LRGUK. Interacts with VDAC2. Expressed in postmeiotic male germ cells (at protein level).

It is found in the cytoplasm. The protein resides in the cytoskeleton. It localises to the mitochondrion. Kinesin is a microtubule-associated force-producing protein that may play a role in organelle transport. Plays a role during spermiogenesis in the development of the sperm tail midpiece and in the normal function of spermatozoa. May play a role in the formation of the mitochondrial sheath formation in the developing spermatid midpiece. The sequence is that of Kinesin light chain 3 (Klc3) from Rattus norvegicus (Rat).